A 245-amino-acid chain; its full sequence is Ribonuclease 3 (245 aa).

Positions 17–146 (FAKKMNELGF…FVGALYLDQG (130 aa)) constitute an RNase III domain. Glutamate 59 is a Mg(2+) binding site. Residue aspartate 63 is part of the active site. Residues aspartate 132 and glutamate 135 each coordinate Mg(2+). Residue glutamate 135 is part of the active site. The DRBM domain occupies 172–241 (DFKTQFQEYV…AESAYSKLKS (70 aa)). The disordered stretch occupies residues 217-245 (ATGQGKTKKESEQKAAESAYSKLKSNNNL).

This sequence belongs to the ribonuclease III family. Homodimer. The cofactor is Mg(2+).

It localises to the cytoplasm. It catalyses the reaction Endonucleolytic cleavage to 5'-phosphomonoester.. Digests double-stranded RNA. Involved in the processing of primary rRNA transcript to yield the immediate precursors to the large and small rRNAs (23S and 16S). Processes some mRNAs, and tRNAs when they are encoded in the rRNA operon. Processes pre-crRNA and tracrRNA of type II CRISPR loci if present in the organism. In Staphylococcus haemolyticus (strain JCSC1435), this protein is Ribonuclease 3.